The primary structure comprises 402 residues: Nicotinate phosphoribosyltransferase (402 aa).

At H224 the chain carries Phosphohistidine; by autocatalysis.

The protein belongs to the NAPRTase family. Post-translationally, transiently phosphorylated on a His residue during the reaction cycle. Phosphorylation strongly increases the affinity for substrates and increases the rate of nicotinate D-ribonucleotide production. Dephosphorylation regenerates the low-affinity form of the enzyme, leading to product release.

It catalyses the reaction nicotinate + 5-phospho-alpha-D-ribose 1-diphosphate + ATP + H2O = nicotinate beta-D-ribonucleotide + ADP + phosphate + diphosphate. The protein operates within cofactor biosynthesis; NAD(+) biosynthesis; nicotinate D-ribonucleotide from nicotinate: step 1/1. Catalyzes the synthesis of beta-nicotinate D-ribonucleotide from nicotinate and 5-phospho-D-ribose 1-phosphate at the expense of ATP. This Neisseria meningitidis serogroup A / serotype 4A (strain DSM 15465 / Z2491) protein is Nicotinate phosphoribosyltransferase.